The primary structure comprises 101 residues: NAD(P)H-quinone oxidoreductase subunit 4L, chloroplastic (101 aa).

Helical transmembrane passes span 2 to 22, 32 to 52, and 61 to 81; these read MLEHVLVLSAYLFSIGIYGLI, MCLELILNAVNINFVTFSDFF, and IFSIFVIAIAAAEAAIGPAIV.

This sequence belongs to the complex I subunit 4L family. NDH is composed of at least 16 different subunits, 5 of which are encoded in the nucleus.

It is found in the plastid. The protein resides in the chloroplast thylakoid membrane. It catalyses the reaction a plastoquinone + NADH + (n+1) H(+)(in) = a plastoquinol + NAD(+) + n H(+)(out). It carries out the reaction a plastoquinone + NADPH + (n+1) H(+)(in) = a plastoquinol + NADP(+) + n H(+)(out). Functionally, NDH shuttles electrons from NAD(P)H:plastoquinone, via FMN and iron-sulfur (Fe-S) centers, to quinones in the photosynthetic chain and possibly in a chloroplast respiratory chain. The immediate electron acceptor for the enzyme in this species is believed to be plastoquinone. Couples the redox reaction to proton translocation, and thus conserves the redox energy in a proton gradient. In Vitis vinifera (Grape), this protein is NAD(P)H-quinone oxidoreductase subunit 4L, chloroplastic.